Consider the following 524-residue polypeptide: Translation initiation factor eIF2B subunit delta (524 aa).

The segment at 1–174 (MAAVAVAVRE…RQQVPTRKDY (174 aa)) is disordered. Alanine 2 bears the N-acetylalanine mark. Basic and acidic residues-rich tracts occupy residues 8-20 (VREE…KTEL) and 31-40 (LTQEEKLQLR). Serine 12 is subject to Phosphoserine. A compositionally biased stretch (basic residues) spans 41–51 (KEKKQQKKKRK). Residue threonine 86 is modified to Phosphothreonine. Basic and acidic residues-rich tracts occupy residues 96 to 121 (SKAE…RKGE) and 161 to 174 (RKPD…RKDY). Residues 171–180 (RKDYGSKVSL) form a may bind the chemical integrated stress response (ISR) inhibitor ISRIB region.

It belongs to the eIF-2B alpha/beta/delta subunits family. Component of the translation initiation factor 2B (eIF2B) complex which is a heterodecamer of two sets of five different subunits: alpha, beta, gamma, delta and epsilon. Subunits alpha, beta and delta comprise a regulatory subcomplex and subunits epsilon and gamma comprise a catalytic subcomplex. Within the complex, the hexameric regulatory complex resides at the center, with the two heterodimeric catalytic subcomplexes bound on opposite sides.

It localises to the cytoplasm. The protein resides in the cytosol. Its activity is regulated as follows. Activated by the chemical integrated stress response (ISR) inhibitor ISRIB which stimulates guanine nucleotide exchange factor activity for both phosphorylated and unphosphorylated eIF2. Functionally, acts as a component of the translation initiation factor 2B (eIF2B) complex, which catalyzes the exchange of GDP for GTP on eukaryotic initiation factor 2 (eIF2) gamma subunit. Its guanine nucleotide exchange factor activity is repressed when bound to eIF2 complex phosphorylated on the alpha subunit, thereby limiting the amount of methionyl-initiator methionine tRNA available to the ribosome and consequently global translation is repressed. This is Translation initiation factor eIF2B subunit delta (Eif2b4) from Rattus norvegicus (Rat).